A 125-amino-acid polypeptide reads, in one-letter code: Large ribosomal subunit protein bL17 (125 aa).

It belongs to the bacterial ribosomal protein bL17 family. Part of the 50S ribosomal subunit. Contacts protein L32.

The sequence is that of Large ribosomal subunit protein bL17 from Acinetobacter baumannii (strain AB307-0294).